We begin with the raw amino-acid sequence, 302 residues long: uncharacterized protein (302 aa).

It belongs to the HAD-like hydrolase superfamily.

It localises to the cytoplasm. It is found in the nucleus. This is an uncharacterized protein from Schizosaccharomyces pombe (strain 972 / ATCC 24843) (Fission yeast).